An 81-amino-acid chain; its full sequence is Omega-conotoxin-like TxMKLT1-0223 (81 aa).

A signal peptide spans 1–22 (MKLTCMMIVAVLFLTAWTFVTA). Residues 23–52 (VPHSSNALENLYLKARHEMENPEASKLNTR) constitute a propeptide that is removed on maturation. 3 disulfides stabilise this stretch: C55-C72, C62-C76, and C71-C80.

It belongs to the conotoxin O1 superfamily. As to expression, expressed by the venom duct.

It localises to the secreted. In terms of biological role, omega-conotoxins act at presynaptic membranes, they bind and block voltage-gated calcium channels (Cav). The protein is Omega-conotoxin-like TxMKLT1-0223 of Conus textile (Cloth-of-gold cone).